Here is a 1464-residue protein sequence, read N- to C-terminus: Gag-Pol polyprotein (1464 aa).

G2 is lipidated: N-myristoyl glycine; by host. Residues 7-31 (VLSGKKTDELEKVRLRPGGKKRYML) are interaction with Gp41. The short motif at 16–22 (LEKVRLR) is the Nuclear export signal element. The Nuclear localization signal signature appears at 26–32 (KKRYMLK). Phosphotyrosine; by host is present on Y130. The interaction with human PPIA/CYPA and NUP153 stretch occupies residues 186 to 223 (NCVGEHQAAMQIIREIINEEAADWDQQHPSPGPMPAGQ). A dimerization/Multimerization of capsid protein p24 region spans residues 274 to 360 (YNPTNILDIK…GGPGQKARLM (87 aa)). 2 consecutive CCHC-type zinc fingers follow at residues 387-404 (VTCW…QCKA) and 408-425 (QGCW…KCPE). The segment covering 483 to 499 (AKELHATREEAEGEQRE) has biased composition (basic and acidic residues). Residues 483-504 (AKELHATREEAEGEQRETLQGG) form a disordered region. The segment at 511–515 (PQFSL) is dimerization of protease. Residues 531-600 (EVLLDTGADD…PINIFGRNIL (70 aa)) form the Peptidase A2 domain. Residue D535 is the For protease activity; shared with dimeric partner of the active site. 2 dimerization of protease regions span residues 559–565 (GIGGFIN) and 598–610 (NILN…LNFP). The Reverse transcriptase domain maps to 654–844 (GQLEEAPPTN…PFKWMGYELW (191 aa)). The Mg(2+) site is built by D719, D794, and D795. The RT 'primer grip' stretch occupies residues 836–844 (FKWMGYELW). Residues 1006 to 1022 (WDQWWTDYWQVTWIPEW) carry the Tryptophan repeat motif motif. Residues 1042–1165 (LEGVETYYTD…VDHLVSQGIR (124 aa)) enclose the RNase H type-1 domain. Positions 1051, 1086, 1106, and 1157 each coordinate Mg(2+). An Integrase-type zinc finger spans residues 1171 to 1212 (EKIEPAQEEHEKYHNNVKELVHKFGIPQLVARQIVNSCDKCQ). 4 residues coordinate Zn(2+): H1180, H1184, C1208, and C1211. Residues 1222-1373 (VNSELGTWQM…PAERIVNMIT (152 aa)) form the Integrase catalytic domain. 3 residues coordinate Mg(2+): D1232, D1284, and E1320. The segment at residues 1391–1438 (FRVYYREGRDQLWKGPGDLLWKGEGAVIIKVGTEIKVIPRRKAKIIRN) is a DNA-binding region (integrase-type).

Homotrimer; further assembles as hexamers of trimers. Interacts with gp41 (via C-terminus). Interacts with host CALM1; this interaction induces a conformational change in the Matrix protein, triggering exposure of the myristate group. Interacts with host AP3D1; this interaction allows the polyprotein trafficking to multivesicular bodies during virus assembly. Part of the pre-integration complex (PIC) which is composed of viral genome, matrix protein, Vpr and integrase. As to quaternary structure, homodimer; the homodimer further multimerizes as homohexamers or homopentamers. Interacts with human PPIA/CYPA. Interacts with human NUP153. Interacts with host PDZD8; this interaction stabilizes the capsid. Interacts with monkey TRIM5; this interaction destabilizes the capsid. In terms of assembly, homodimer, whose active site consists of two apposed aspartic acid residues. Heterodimer of p66 RT and p51 RT (RT p66/p51). Heterodimerization of RT is essential for DNA polymerase activity. The overall folding of the subdomains is similar in p66 RT and p51 RT but the spatial arrangements of the subdomains are dramatically different. As to quaternary structure, homotetramer; may further associate as a homohexadecamer. Part of the pre-integration complex (PIC) which is composed of viral genome, matrix protein, Vpr and integrase. Interacts with human SMARCB1/INI1 and human PSIP1/LEDGF isoform 1. Interacts with human KPNA3; this interaction might play a role in nuclear import of the pre-integration complex. Interacts with human NUP153; this interaction might play a role in nuclear import of the pre-integration complex. Mg(2+) serves as cofactor. Post-translationally, specific enzymatic cleavages by the viral protease yield mature proteins. The protease is released by autocatalytic cleavage. The polyprotein is cleaved during and after budding, this process is termed maturation. Proteolytic cleavage of p66 RT removes the RNase H domain to yield the p51 RT subunit. Nucleocapsid protein p7 might be further cleaved after virus entry.

The protein localises to the host cell membrane. The protein resides in the host endosome. Its subcellular location is the host multivesicular body. It localises to the virion membrane. It is found in the host nucleus. The protein localises to the host cytoplasm. The protein resides in the virion. The catalysed reaction is Endopeptidase for which the P1 residue is preferably hydrophobic.. It carries out the reaction Endohydrolysis of RNA in RNA/DNA hybrids. Three different cleavage modes: 1. sequence-specific internal cleavage of RNA. Human immunodeficiency virus type 1 and Moloney murine leukemia virus enzymes prefer to cleave the RNA strand one nucleotide away from the RNA-DNA junction. 2. RNA 5'-end directed cleavage 13-19 nucleotides from the RNA end. 3. DNA 3'-end directed cleavage 15-20 nucleotides away from the primer terminus.. The enzyme catalyses 3'-end directed exonucleolytic cleavage of viral RNA-DNA hybrid.. It catalyses the reaction DNA(n) + a 2'-deoxyribonucleoside 5'-triphosphate = DNA(n+1) + diphosphate. Its activity is regulated as follows. Protease: The viral protease is inhibited by many synthetic protease inhibitors (PIs), such as amprenavir, atazanavir, indinavir, loprinavir, nelfinavir, ritonavir and saquinavir. Use of protease inhibitors in tritherapy regimens permit more ambitious therapeutic strategies. Reverse transcriptase/ribonuclease H: RT can be inhibited either by nucleoside RT inhibitors (NRTIs) or by non nucleoside RT inhibitors (NNRTIs). NRTIs act as chain terminators, whereas NNRTIs inhibit DNA polymerization by binding a small hydrophobic pocket near the RT active site and inducing an allosteric change in this region. Classical NRTIs are abacavir, adefovir (PMEA), didanosine (ddI), lamivudine (3TC), stavudine (d4T), tenofovir (PMPA), zalcitabine (ddC), and zidovudine (AZT). Classical NNRTIs are atevirdine (BHAP U-87201E), delavirdine, efavirenz (DMP-266), emivirine (I-EBU), and nevirapine (BI-RG-587). The tritherapies used as a basic effective treatment of AIDS associate two NRTIs and one NNRTI. Mediates, with Gag polyprotein, the essential events in virion assembly, including binding the plasma membrane, making the protein-protein interactions necessary to create spherical particles, recruiting the viral Env proteins, and packaging the genomic RNA via direct interactions with the RNA packaging sequence (Psi). Gag-Pol polyprotein may regulate its own translation, by the binding genomic RNA in the 5'-UTR. At low concentration, the polyprotein would promote translation, whereas at high concentration, the polyprotein would encapsidate genomic RNA and then shut off translation. Functionally, targets the polyprotein to the plasma membrane via a multipartite membrane-binding signal, that includes its myristoylated N-terminus. Matrix protein is part of the pre-integration complex. Implicated in the release from host cell mediated by Vpu. Binds to RNA. Its function is as follows. Forms the conical core that encapsulates the genomic RNA-nucleocapsid complex in the virion. Most core are conical, with only 7% tubular. The core is constituted by capsid protein hexamer subunits. The core is disassembled soon after virion entry. Host restriction factors such as TRIM5-alpha or TRIMCyp bind retroviral capsids and cause premature capsid disassembly, leading to blocks in reverse transcription. Capsid restriction by TRIM5 is one of the factors which restricts HIV-1 to the human species. Host PIN1 apparently facilitates the virion uncoating. On the other hand, interactions with PDZD8 or CYPA stabilize the capsid. In terms of biological role, encapsulates and protects viral dimeric unspliced genomic RNA (gRNA). Binds these RNAs through its zinc fingers. Acts as a nucleic acid chaperone which is involved in rearangement of nucleic acid secondary structure during gRNA retrotranscription. Also facilitates template switch leading to recombination. As part of the polyprotein, participates in gRNA dimerization, packaging, tRNA incorporation and virion assembly. Aspartyl protease that mediates proteolytic cleavages of Gag and Gag-Pol polyproteins during or shortly after the release of the virion from the plasma membrane. Cleavages take place as an ordered, step-wise cascade to yield mature proteins. This process is called maturation. Displays maximal activity during the budding process just prior to particle release from the cell. Also cleaves Nef and Vif, probably concomitantly with viral structural proteins on maturation of virus particles. Hydrolyzes host EIF4GI and PABP1 in order to shut off the capped cellular mRNA translation. The resulting inhibition of cellular protein synthesis serves to ensure maximal viral gene expression and to evade host immune response. Functionally, multifunctional enzyme that converts the viral RNA genome into dsDNA in the cytoplasm, shortly after virus entry into the cell. This enzyme displays a DNA polymerase activity that can copy either DNA or RNA templates, and a ribonuclease H (RNase H) activity that cleaves the RNA strand of RNA-DNA heteroduplexes in a partially processive 3' to 5' endonucleasic mode. Conversion of viral genomic RNA into dsDNA requires many steps. A tRNA(3)-Lys binds to the primer-binding site (PBS) situated at the 5'-end of the viral RNA. RT uses the 3' end of the tRNA primer to perform a short round of RNA-dependent minus-strand DNA synthesis. The reading proceeds through the U5 region and ends after the repeated (R) region which is present at both ends of viral RNA. The portion of the RNA-DNA heteroduplex is digested by the RNase H, resulting in a ssDNA product attached to the tRNA primer. This ssDNA/tRNA hybridizes with the identical R region situated at the 3' end of viral RNA. This template exchange, known as minus-strand DNA strong stop transfer, can be either intra- or intermolecular. RT uses the 3' end of this newly synthesized short ssDNA to perform the RNA-dependent minus-strand DNA synthesis of the whole template. RNase H digests the RNA template except for two polypurine tracts (PPTs) situated at the 5'-end and near the center of the genome. It is not clear if both polymerase and RNase H activities are simultaneous. RNase H probably can proceed both in a polymerase-dependent (RNA cut into small fragments by the same RT performing DNA synthesis) and a polymerase-independent mode (cleavage of remaining RNA fragments by free RTs). Secondly, RT performs DNA-directed plus-strand DNA synthesis using the PPTs that have not been removed by RNase H as primers. PPTs and tRNA primers are then removed by RNase H. The 3' and 5' ssDNA PBS regions hybridize to form a circular dsDNA intermediate. Strand displacement synthesis by RT to the PBS and PPT ends produces a blunt ended, linear dsDNA copy of the viral genome that includes long terminal repeats (LTRs) at both ends. Its function is as follows. Catalyzes viral DNA integration into the host chromosome, by performing a series of DNA cutting and joining reactions. This enzyme activity takes place after virion entry into a cell and reverse transcription of the RNA genome in dsDNA. The first step in the integration process is 3' processing. This step requires a complex comprising the viral genome, matrix protein, Vpr and integrase. This complex is called the pre-integration complex (PIC). The integrase protein removes 2 nucleotides from each 3' end of the viral DNA, leaving recessed CA OH's at the 3' ends. In the second step, the PIC enters cell nucleus. This process is mediated through integrase and Vpr proteins, and allows the virus to infect a non dividing cell. This ability to enter the nucleus is specific of lentiviruses, other retroviruses cannot and rely on cell division to access cell chromosomes. In the third step, termed strand transfer, the integrase protein joins the previously processed 3' ends to the 5' ends of strands of target cellular DNA at the site of integration. The 5'-ends are produced by integrase-catalyzed staggered cuts, 5 bp apart. A Y-shaped, gapped, recombination intermediate results, with the 5'-ends of the viral DNA strands and the 3' ends of target DNA strands remaining unjoined, flanking a gap of 5 bp. The last step is viral DNA integration into host chromosome. This involves host DNA repair synthesis in which the 5 bp gaps between the unjoined strands are filled in and then ligated. Since this process occurs at both cuts flanking the HIV genome, a 5 bp duplication of host DNA is produced at the ends of HIV-1 integration. Alternatively, Integrase may catalyze the excision of viral DNA just after strand transfer, this is termed disintegration. This chain is Gag-Pol polyprotein (gag-pol), found in Human immunodeficiency virus type 2 subtype B (isolate EHO) (HIV-2).